A 260-amino-acid chain; its full sequence is Thiazole synthase (260 aa).

Lysine 96 acts as the Schiff-base intermediate with DXP in catalysis. Residues glycine 157, 184–185 (AG), and 206–207 (NT) contribute to the 1-deoxy-D-xylulose 5-phosphate site.

Belongs to the ThiG family. Homotetramer. Forms heterodimers with either ThiH or ThiS.

It localises to the cytoplasm. The catalysed reaction is [ThiS sulfur-carrier protein]-C-terminal-Gly-aminoethanethioate + 2-iminoacetate + 1-deoxy-D-xylulose 5-phosphate = [ThiS sulfur-carrier protein]-C-terminal Gly-Gly + 2-[(2R,5Z)-2-carboxy-4-methylthiazol-5(2H)-ylidene]ethyl phosphate + 2 H2O + H(+). It functions in the pathway cofactor biosynthesis; thiamine diphosphate biosynthesis. In terms of biological role, catalyzes the rearrangement of 1-deoxy-D-xylulose 5-phosphate (DXP) to produce the thiazole phosphate moiety of thiamine. Sulfur is provided by the thiocarboxylate moiety of the carrier protein ThiS. In vitro, sulfur can be provided by H(2)S. This Rhodopseudomonas palustris (strain HaA2) protein is Thiazole synthase.